The chain runs to 151 residues: Ribosomal RNA large subunit methyltransferase H (151 aa).

S-adenosyl-L-methionine contacts are provided by residues Gly-100 and 119–124 (LSKMTF).

This sequence belongs to the RNA methyltransferase RlmH family. In terms of assembly, homodimer.

It is found in the cytoplasm. The catalysed reaction is pseudouridine(1915) in 23S rRNA + S-adenosyl-L-methionine = N(3)-methylpseudouridine(1915) in 23S rRNA + S-adenosyl-L-homocysteine + H(+). Functionally, specifically methylates the pseudouridine at position 1915 (m3Psi1915) in 23S rRNA. In Thermotoga sp. (strain RQ2), this protein is Ribosomal RNA large subunit methyltransferase H.